The primary structure comprises 347 residues: FMRFamide-related peptides (347 aa).

Positions Met1–Ile22 are cleaved as a signal peptide. Residues Ile23–Ala102 constitute a propeptide that is removed on maturation. Phe114 bears the Phenylalanine amide mark. Tyr146 bears the Tyrosine amide mark. Phenylalanine amide occurs at positions 157, 168, 179, 190, 201, 212, 223, and 232. Residues Ser235–Leu240 constitute a propeptide that is removed on maturation. Residues Phe250 and Phe259 each carry the phenylalanine amide modification. Ser270 carries the post-translational modification Serine amide. Phe280 carries the phenylalanine amide modification. A propeptide spanning residues Ser283–Gln347 is cleaved from the precursor. The tract at residues Ser283–Gln347 is disordered. Residues Ser305–Leu320 are compositionally biased toward basic and acidic residues. A compositionally biased stretch (polar residues) spans Gln321–Gln347.

This sequence belongs to the FARP (FMRFamide related peptide) family. This precursor includes 13 peptides that have FMRF or related sequences at their C-termini, and other putative neuropeptides.

Its subcellular location is the secreted. Its function is as follows. In insects, FMRFamide and related peptides have modulatory actions at skeletal neuromuscular junctions, and peptides that are immunologically related to FMRFamide are released into the circulation from neurohemal organs. This Drosophila melanogaster (Fruit fly) protein is FMRFamide-related peptides.